The following is a 165-amino-acid chain: Type 3 secretion system regulator YopR (165 aa).

It belongs to the YopR family.

The protein localises to the secreted. May be involved in the regulation of the assembly of the type III secretion system (T3SS), also called injectisome, which is used to inject bacterial effector proteins into eukaryotic host cells. May control the secretion and/or polymerization of YscF/SctF, the principal component of the needle filament, thereby impacting the assembly of the T3SS. Involved in pathogenesis. The sequence is that of Type 3 secretion system regulator YopR from Yersinia pestis.